Reading from the N-terminus, the 958-residue chain is Transportin MOS14 (958 aa).

The 68-residue stretch at 26–93 (ADRWLQNFQG…RQSLTTLLKK (68 aa)) folds into the Importin N-terminal domain.

It belongs to the importin beta family. Interacts with RS2Z33, RSZ21, RS31A, SR34 and RAN1.

It is found in the nucleus. Its function is as follows. Functions as a nuclear import receptor for serine-arginine rich (SR) proteins. Regulates nuclear import of SR proteins that are required for proper splicing of the two resistance (R) genes SNC1 and RPS4, a crucial step for their functions in plant immunity. This Arabidopsis thaliana (Mouse-ear cress) protein is Transportin MOS14.